Here is a 471-residue protein sequence, read N- to C-terminus: 6-phosphofructo-2-kinase/fructose-2,6-bisphosphatase 1 (471 aa).

Serine 2 carries the post-translational modification N-acetylserine. The 6-phosphofructo-2-kinase stretch occupies residues 2–250; it reads SQEMGELTQT…VYYLMNIHVT (249 aa). Position 33 is a phosphoserine; by PKA (serine 33). 49–57 is a binding site for ATP; the sequence is GLPARGKTY. Arginine 82 and arginine 105 together coordinate beta-D-fructose 6-phosphate. The active site involves aspartate 131. Positions 133 and 139 each coordinate beta-D-fructose 6-phosphate. The residue at position 141 (serine 141) is a Phosphoserine. Cysteine 161 is an active-site residue. 170–175 provides a ligand contact to ATP; the sequence is NIRQVK. 3 residues coordinate beta-D-fructose 6-phosphate: lysine 175, arginine 196, and tyrosine 200. Residues 251 to 471 are fructose-2,6-bisphosphatase; that stretch reads PRSIYLCRHG…EALDTVPAHY (221 aa). Position 258 (arginine 258) interacts with beta-D-fructose 2,6-bisphosphate. Histidine 259 (tele-phosphohistidine intermediate) is an active-site residue. Residues asparagine 265, glycine 271, and arginine 308 each coordinate beta-D-fructose 2,6-bisphosphate. The active-site Proton donor/acceptor is the glutamate 328. Positions 339, 353, 357, 368, 394, and 398 each coordinate beta-D-fructose 2,6-bisphosphate. 350–353 contacts ATP; that stretch reads FALR. Residues 394 to 398 and tyrosine 430 contribute to the ATP site; that span reads QAVMR.

In the C-terminal section; belongs to the phosphoglycerate mutase family. As to quaternary structure, homodimer. Liver.

It carries out the reaction beta-D-fructose 2,6-bisphosphate + H2O = beta-D-fructose 6-phosphate + phosphate. It catalyses the reaction beta-D-fructose 6-phosphate + ATP = beta-D-fructose 2,6-bisphosphate + ADP + H(+). Its activity is regulated as follows. Phosphorylation at Ser-33 inhibits the kinase and activates the bisphosphatase. Synthesis and degradation of fructose 2,6-bisphosphate. The protein is 6-phosphofructo-2-kinase/fructose-2,6-bisphosphatase 1 of Bos taurus (Bovine).